The following is a 398-amino-acid chain: Acetate kinase (398 aa).

N8 contributes to the Mg(2+) binding site. K15 contacts ATP. R89 contributes to the substrate binding site. Catalysis depends on D146, which acts as the Proton donor/acceptor. Residues 206–210 (HIGNG), 283–285 (DMR), and 331–335 (GMGEN) each bind ATP. E383 is a binding site for Mg(2+).

It belongs to the acetokinase family. As to quaternary structure, homodimer. Mg(2+) serves as cofactor. Mn(2+) is required as a cofactor.

The protein localises to the cytoplasm. The catalysed reaction is acetate + ATP = acetyl phosphate + ADP. Its pathway is metabolic intermediate biosynthesis; acetyl-CoA biosynthesis; acetyl-CoA from acetate: step 1/2. Functionally, catalyzes the formation of acetyl phosphate from acetate and ATP. Can also catalyze the reverse reaction. This chain is Acetate kinase, found in Streptococcus pyogenes serotype M28 (strain MGAS6180).